The primary structure comprises 409 residues: Putative competence-damage inducible protein (409 aa).

It belongs to the CinA family.

The chain is Putative competence-damage inducible protein from Clostridium botulinum (strain Okra / Type B1).